A 59-amino-acid polypeptide reads, in one-letter code: UPF0434 protein VV1_2087 (59 aa).

Belongs to the UPF0434 family.

The sequence is that of UPF0434 protein VV1_2087 from Vibrio vulnificus (strain CMCP6).